Consider the following 469-residue polypeptide: MSAVITPAEFNDYKVADISLAAWGRRETIIAESEMPALMGLRRKYAAEQPLKGAKILGCIHMTIQTAVLIETLVALGAEVRWSSCNIFSTQDQAAAAIAAAGIAVYAWKGETEEEYEWCIEQTILKDGQPWDANMILDDGGDLTEIIHKKYPAMLDKIHGVTEETTTGVHRLLDMLAKGELKIPAINVNDSVTKSKNDNKYGCRHSLNDAIKRGTDHLLSGKQALVIGYGDVGKGSAQSLRQEGMIVKVTEVDPICAMQACMDGFELVSPFIDGENDGTEASIDKALLGKIDLIVTTTGNVNVCDSNMLKALKKRAVVCNIGHFDNEIDTAFMRKNWAWEEVKPQVHKIHRTGAGAFDAQNDDYLILLAEGRLVNLGNATGHPSRIMDGSFANQVLAQIFLFDQKYADLAPAKKAERLTVEVLPKKLDEEVALEMVRGFGGVVTKLTKTQADYIGVTVEGPFKPDAYRY.

Residues Thr-63, Asp-139, and Glu-164 each coordinate substrate. 165 to 167 (TTT) contacts NAD(+). Lys-194 and Asp-198 together coordinate substrate. Residues Asn-199, 228–233 (GYGDVG), Glu-251, Asn-300, 321–323 (IGH), and Asn-375 each bind NAD(+).

The protein belongs to the adenosylhomocysteinase family. NAD(+) is required as a cofactor.

It is found in the cytoplasm. The enzyme catalyses S-adenosyl-L-homocysteine + H2O = L-homocysteine + adenosine. The protein operates within amino-acid biosynthesis; L-homocysteine biosynthesis; L-homocysteine from S-adenosyl-L-homocysteine: step 1/1. Functionally, may play a key role in the regulation of the intracellular concentration of adenosylhomocysteine. This is Adenosylhomocysteinase from Pseudomonas syringae pv. tomato (strain ATCC BAA-871 / DC3000).